The sequence spans 253 residues: Phosphoglycerate mutase 2 (253 aa).

T3 carries the phosphothreonine modification. Residues 10 to 17 (RHGESSWN), 23 to 24 (CG), R62, 89 to 92 (ERHY), K100, and 116 to 117 (RR) each bind substrate. H11 functions as the Tele-phosphohistidine intermediate in the catalytic mechanism. S14 and S15 each carry phosphoserine. E89 acts as the Proton donor/acceptor in catalysis. S118 carries the post-translational modification Phosphoserine. T121 is modified (phosphothreonine). Phosphotyrosine occurs at positions 132 and 133. Position 135 is a phosphoserine (S135). T152 is subject to Phosphothreonine. 187-188 (GN) provides a ligand contact to substrate.

Belongs to the phosphoglycerate mutase family. BPG-dependent PGAM subfamily. As to quaternary structure, homodimer. Interacts with ENO1.

The enzyme catalyses (2R)-2-phosphoglycerate = (2R)-3-phosphoglycerate. It carries out the reaction (2R)-3-phospho-glyceroyl phosphate = (2R)-2,3-bisphosphoglycerate + H(+). Its function is as follows. Interconversion of 3- and 2-phosphoglycerate with 2,3-bisphosphoglycerate as the primer of the reaction. Can also catalyze the reaction of EC 5.4.2.4 (synthase), but with a reduced activity. This Rattus norvegicus (Rat) protein is Phosphoglycerate mutase 2 (Pgam2).